A 361-amino-acid polypeptide reads, in one-letter code: MTSSYHQQLQAKIDRITTQFSEFTPPTLEVFESPEQHFRMRAEFRIWHTENDMFYAMFERNDDGKQKTVVRIDEFPIADKSINDLMPLLLAELKANSLLSQRLFEVDFLATLSGEMLVTLIYHRKLNQEWEQEAKALAEKLNIKIMGRSRGQKIVIGDDFVVEEFELLNRSFKYKQIESSFTQPNAQVCKKMLQWACDAAEGSKKHLLELYCGNGNFTLPLSLKFERVLATELAKSSVYAAQWNIEQNQIDNIQVARLSAEEFTQAYQGEREFRRLQEADIDIQSYDFDTVFVDPPRAGIDDETLKLLQSFERIIYISCNPNTLYENLKTLTQTHRVTKFALFDQFPYTHHVESGVLLEKI.

Residues Q183, Y211, N216, E232, and D294 each coordinate S-adenosyl-L-methionine. C319 functions as the Nucleophile in the catalytic mechanism. E353 acts as the Proton acceptor in catalysis.

It belongs to the class I-like SAM-binding methyltransferase superfamily. RNA M5U methyltransferase family. TrmA subfamily.

It carries out the reaction uridine(54) in tRNA + S-adenosyl-L-methionine = 5-methyluridine(54) in tRNA + S-adenosyl-L-homocysteine + H(+). The enzyme catalyses uridine(341) in tmRNA + S-adenosyl-L-methionine = 5-methyluridine(341) in tmRNA + S-adenosyl-L-homocysteine + H(+). Functionally, dual-specificity methyltransferase that catalyzes the formation of 5-methyluridine at position 54 (m5U54) in all tRNAs, and that of position 341 (m5U341) in tmRNA (transfer-mRNA). This chain is tRNA/tmRNA (uracil-C(5))-methyltransferase, found in Acinetobacter baumannii (strain ACICU).